Reading from the N-terminus, the 391-residue chain is tRNA (cytosine(38)-C(5))-methyltransferase (391 aa).

One can recognise an SAM-dependent MTase C5-type domain in the interval 4-391; that stretch reads LRVLELYSGI…VSKLLTVLCE (388 aa). Residues 13–15, Asp-34, 57–58, and Ser-76 each bind S-adenosyl-L-methionine; these read IGG and IE. Residue Cys-79 is part of the active site. Ser-376 serves as a coordination point for S-adenosyl-L-methionine.

It belongs to the class I-like SAM-binding methyltransferase superfamily. C5-methyltransferase family.

It is found in the cytoplasm. It catalyses the reaction cytidine(38) in tRNA + S-adenosyl-L-methionine = 5-methylcytidine(38) in tRNA + S-adenosyl-L-homocysteine + H(+). In terms of biological role, specifically methylates cytosine 38 in the anticodon loop of tRNA(Asp). Has higher activity on tRNA(Asp) modified with queuosine at position 34. The sequence is that of tRNA (cytosine(38)-C(5))-methyltransferase (Trdmt1) from Rattus norvegicus (Rat).